The primary structure comprises 118 residues: Large ribosomal subunit protein bL12 (118 aa).

The residue at position 1 (methionine 1) is an N-acetylmethionine; in form MA2.

The protein belongs to the bacterial ribosomal protein bL12 family. In terms of assembly, homodimer. Part of the ribosomal stalk of the 50S ribosomal subunit. Forms a multimeric L10(L12)X complex, where L10 forms an elongated spine to which 2 to 4 L12 dimers bind in a sequential fashion. Binds GTP-bound translation factors. In terms of processing, acetylation of Met-1 converts MA1 to MA2.

Functionally, forms part of the ribosomal stalk which helps the ribosome interact with GTP-bound translation factors. Is thus essential for accurate translation. The chain is Large ribosomal subunit protein bL12 from Micrococcus luteus (Micrococcus lysodeikticus).